We begin with the raw amino-acid sequence, 235 residues long: Kinetochore protein Spc25 (235 aa).

A coiled-coil region spans residues 44–106; that stretch reads KNILSAKEAI…DMEAQLLRHT (63 aa). The interval 193–216 is disordered; the sequence is EVAGASPVTPSGSERPKATSKHSN.

The protein belongs to the SPC25 family. In terms of assembly, component of the Ndc80 complex, which is composed of Ndc80, Nuf2 and Spc25.

The protein localises to the nucleus. Its subcellular location is the chromosome. The protein resides in the centromere. It is found in the kinetochore. Functionally, acts as a component of the essential kinetochore-associated Ndc80 complex, which is required for chromosome segregation and spindle checkpoint activity during meiosis and mitosis. Required for kinetochore integrity and the organization of stable microtubule binding sites in the outer plate of the kinetochore. Participates in SAC signaling that responds specifically to disruptions in spindle microtubule dynamics. The NDC80 complex synergistically enhances the affinity of the SKA1 complex for microtubules and may allow the NDC80 complex to track depolymerizing microtubules. This Drosophila pseudoobscura pseudoobscura (Fruit fly) protein is Kinetochore protein Spc25.